An 879-amino-acid chain; its full sequence is Leucine--tRNA ligase (879 aa).

The short motif at 45 to 55 (PYPSGALHMGH) is the 'HIGH' region element. Residues 637–641 (KMSKS) carry the 'KMSKS' region motif. ATP is bound at residue lysine 640.

The protein belongs to the class-I aminoacyl-tRNA synthetase family.

It is found in the cytoplasm. The catalysed reaction is tRNA(Leu) + L-leucine + ATP = L-leucyl-tRNA(Leu) + AMP + diphosphate. The protein is Leucine--tRNA ligase of Xylella fastidiosa (strain M23).